A 343-amino-acid polypeptide reads, in one-letter code: Glycerol-3-phosphate dehydrogenase [NAD(P)+] (343 aa).

Residues W29, R49, and K122 each contribute to the NADPH site. Residues K122, G150, and S152 each coordinate sn-glycerol 3-phosphate. NADPH is bound at residue A154. 5 residues coordinate sn-glycerol 3-phosphate: K205, D258, S268, R269, and N270. K205 (proton acceptor) is an active-site residue. R269 lines the NADPH pocket. Positions 288 and 290 each coordinate NADPH.

The protein belongs to the NAD-dependent glycerol-3-phosphate dehydrogenase family.

The protein localises to the cytoplasm. The enzyme catalyses sn-glycerol 3-phosphate + NAD(+) = dihydroxyacetone phosphate + NADH + H(+). The catalysed reaction is sn-glycerol 3-phosphate + NADP(+) = dihydroxyacetone phosphate + NADPH + H(+). It functions in the pathway membrane lipid metabolism; glycerophospholipid metabolism. Catalyzes the reduction of the glycolytic intermediate dihydroxyacetone phosphate (DHAP) to sn-glycerol 3-phosphate (G3P), the key precursor for phospholipid synthesis. The polypeptide is Glycerol-3-phosphate dehydrogenase [NAD(P)+] (Mesorhizobium japonicum (strain LMG 29417 / CECT 9101 / MAFF 303099) (Mesorhizobium loti (strain MAFF 303099))).